Consider the following 257-residue polypeptide: NAD-capped RNA hydrolase NudC (257 aa).

Residues lysine 25 and arginine 69 each contribute to the substrate site. Residues cysteine 98 and cysteine 101 each contribute to the Zn(2+) site. Glutamate 111 lines the substrate pocket. Zn(2+)-binding residues include cysteine 116 and cysteine 119. Substrate is bound at residue tyrosine 124. The region spanning 125 to 248 (PQIAPCIIVA…TVARRLIEDT (124 aa)) is the Nudix hydrolase domain. A divalent metal cation contacts are provided by alanine 158, glutamate 174, and glutamate 178. The Nudix box signature appears at 159-180 (GFVEVGETLEQAVAREVMEESG). Substrate is bound at residue 192–199 (QPWPFPQS). Glutamate 219 serves as a coordination point for a divalent metal cation. Alanine 241 is a substrate binding site.

Belongs to the Nudix hydrolase family. NudC subfamily. As to quaternary structure, homodimer. It depends on Mg(2+) as a cofactor. The cofactor is Mn(2+). Requires Zn(2+) as cofactor.

The enzyme catalyses a 5'-end NAD(+)-phospho-ribonucleoside in mRNA + H2O = a 5'-end phospho-adenosine-phospho-ribonucleoside in mRNA + beta-nicotinamide D-ribonucleotide + 2 H(+). It catalyses the reaction NAD(+) + H2O = beta-nicotinamide D-ribonucleotide + AMP + 2 H(+). The catalysed reaction is NADH + H2O = reduced beta-nicotinamide D-ribonucleotide + AMP + 2 H(+). MRNA decapping enzyme that specifically removes the nicotinamide adenine dinucleotide (NAD) cap from a subset of mRNAs by hydrolyzing the diphosphate linkage to produce nicotinamide mononucleotide (NMN) and 5' monophosphate mRNA. The NAD-cap is present at the 5'-end of some mRNAs and stabilizes RNA against 5'-processing. Has preference for mRNAs with a 5'-end purine. Catalyzes the hydrolysis of a broad range of dinucleotide pyrophosphates. The chain is NAD-capped RNA hydrolase NudC from Shigella boydii serotype 18 (strain CDC 3083-94 / BS512).